Consider the following 456-residue polypeptide: Molybdate transporter 1 (456 aa).

9 helical membrane passes run 67–87 (LIFTGIYNAITGAVYGVPMPV), 110–130 (IMAAGICTGGILFVLGISGLM), 133–153 (VFNIIPLSVVRGIQLSQGLAF), 177–197 (PWLGLDGLVLALVCVLFIVLV), 225–245 (VIANVPSALLIFLLGVVLAFI), 309–329 (AASVSMTVGLMNMVGCWFGAM), 354–374 (LLGVAKLVLGLVLGGSLVGIL), 377–397 (FPVGVLGALLLFAGVELAMAA), and 417–437 (LGSNAAIGFVAGDLLYVVLWM).

It belongs to the SLC26A/SulP transporter (TC 2.A.53) family. Strongly expressed in roots. Detected in the vascular tissues of hypocotyls, in petioles and vascular tissues of cotyledons and leaves, in mesophyll cells, stamen, sepals and siliques.

The protein resides in the cell membrane. Its subcellular location is the endomembrane system. It localises to the mitochondrion membrane. With respect to regulation, not inhibited by sulfate. High affinity molybdate transporter. Unable to transport sulfate. The sequence is that of Molybdate transporter 1 (MOT1) from Arabidopsis thaliana (Mouse-ear cress).